Reading from the N-terminus, the 1531-residue chain is Multidrug resistance-associated protein 1 (1531 aa).

Residues 1–33 (MALRGFCSADGSDPLWDWNVTWNTSNPDFTKCF) lie on the Extracellular side of the membrane. N-linked (GlcNAc...) asparagine glycosylation is found at asparagine 19 and asparagine 23. Residues 34–54 (QNTVLVWVPCFYLWACFPFYF) traverse the membrane as a helical segment. The Cytoplasmic segment spans residues 55–74 (LYLSRHDRGYIQMTPLNKTK). The helical transmembrane segment at 75-95 (TALGFLLWIVCWADLFYSFWE) threads the bilayer. Residues 96–100 (RSRGI) are Extracellular-facing. A helical membrane pass occupies residues 101 to 121 (FLAPVFLVSPTLLGITMLLAT). Residues 122 to 133 (FLIQLERRKGVQ) are Cytoplasmic-facing. A helical transmembrane segment spans residues 134 to 154 (SSGIMLTFWLVALVCALAILR). Topologically, residues 155–172 (SKIMTALKEDAQVDLFRD) are extracellular. The chain crosses the membrane as a helical span at residues 173–193 (ITFYVYFSLLLIQLVLSCFSD). Residues 194 to 316 (RSPLFSETIH…KEWNPSLFKV (123 aa)) lie on the Cytoplasmic side of the membrane. Tyrosine 277 carries the phosphotyrosine modification. Serine 289 carries the post-translational modification Phosphoserine. Residues 317 to 337 (LYKTFGPYFLMSFFFKAIHDL) traverse the membrane as a helical segment. The region spanning 325–608 (FLMSFFFKAI…LPMVISSIVQ (284 aa)) is the ABC transmembrane type-1 1 domain. The Extracellular segment spans residues 338-363 (MMFSGPQILKLLIKFVNDTKAPDWQG). Residues 364 to 384 (YFYTVLLFVTACLQTLVLHQY) traverse the membrane as a helical segment. The Cytoplasmic segment spans residues 385–440 (FHICFVSGMRIKTAVIGAVYRKALVITNSARKSSTVGEIVNLMSVDAQRFMDLATY). The chain crosses the membrane as a helical span at residues 441–461 (INMIWSAPLQVILALYLLWLN). The Extracellular segment spans residues 462-464 (LGP). A helical membrane pass occupies residues 465–485 (SVLAGVAVMVLMVPVNAVMAM). Over 486–547 (KTKTYQVAHM…VLKKSAYLSA (62 aa)) the chain is Cytoplasmic. At lysine 503 the chain carries N6-succinyllysine. The helical transmembrane segment at 548–568 (VGTFTWVCTPFLVALCTFAVY) threads the bilayer. The Extracellular segment spans residues 569–590 (VTIDENNILDAQTAFVSLALFN). A helical transmembrane segment spans residues 591 to 611 (ILRFPLNILPMVISSIVQASV). Over 612 to 967 (SLKRLRIFLS…VKLSVYWDYM (356 aa)) the chain is Cytoplasmic. Residues 644-868 (ITVRNATFTW…DGAFAEFLRT (225 aa)) form the ABC transporter 1 domain. ATP contacts are provided by residues tryptophan 653, 678–685 (GQVGCGKS), and glutamine 713. Residues serine 905, serine 915, and serine 930 each carry the phosphoserine modification. A helical transmembrane segment spans residues 968-988 (KAIGLFISFLSIFLFMCNHVS). The ABC transmembrane type-1 2 domain occupies 975–1256 (SFLSIFLFMC…LVRMSSEMET (282 aa)). Residues 989–1025 (ALASNYWLSLWTDDPIVNGTQEHTKVRLSVYGALGIS) are Extracellular-facing. Asparagine 1006 carries an N-linked (GlcNAc...) asparagine glycan. The helical transmembrane segment at 1026-1046 (QGIAVFGYSMAVSIGGILASR) threads the bilayer. Residues 1047-1089 (CLHVDLLHSILRSPMSFFERTPSGNLVNRFSKELDTVDSMIPE) lie on the Cytoplasmic side of the membrane. A helical transmembrane segment spans residues 1090-1110 (VIKMFMGSLFNVIGACIVILL). Alanine 1111 is a topological domain (extracellular). Residues 1112–1132 (TPIAAIIIPPLGLIYFFVQRF) traverse the membrane as a helical segment. The Cytoplasmic portion of the chain corresponds to 1133 to 1203 (YVASSRQLKR…VANRWLAVRL (71 aa)). The chain crosses the membrane as a helical span at residues 1204 to 1224 (ECVGNCIVLFAALFAVISRHS). The Extracellular portion of the chain corresponds to 1225–1226 (LS). A helical membrane pass occupies residues 1227–1247 (AGLVGLSVSYSLQVTTYLNWL). Over 1248-1531 (VRMSSEMETN…YSMAKDAGLV (284 aa)) the chain is Cytoplasmic. The ABC transporter 2 domain maps to 1293–1527 (VEFRNYCLRY…RGLFYSMAKD (235 aa)). 1327 to 1334 (GRTGAGKS) lines the ATP pocket.

It belongs to the ABC transporter superfamily. ABCC family. Conjugate transporter (TC 3.A.1.208) subfamily. In terms of assembly, (Microbial infection) Interacts with human cytomegalovirus protein UL138; this interaction mediates MRP1 degradation via the lysosome. Lung, testis and peripheral blood mononuclear cells.

The protein localises to the cell membrane. It is found in the basolateral cell membrane. It carries out the reaction ATP + H2O + xenobioticSide 1 = ADP + phosphate + xenobioticSide 2.. The catalysed reaction is an S-substituted glutathione(in) + ATP + H2O = an S-substituted glutathione(out) + ADP + phosphate + H(+). The enzyme catalyses sphing-4-enine 1-phosphate(in) + ATP + H2O = sphing-4-enine 1-phosphate(out) + ADP + phosphate + H(+). It catalyses the reaction leukotriene C4(in) + ATP + H2O = leukotriene C4(out) + ADP + phosphate + H(+). It carries out the reaction 17beta-estradiol 17-O-(beta-D-glucuronate)(in) + ATP + H2O = 17beta-estradiol 17-O-(beta-D-glucuronate)(out) + ADP + phosphate + H(+). The catalysed reaction is daunorubicin(in) + ATP + H2O = daunorubicin(out) + ADP + phosphate + H(+). The enzyme catalyses vincristine(in) + ATP + H2O = vincristine(out) + ADP + phosphate + H(+). It catalyses the reaction 2',3'-cGAMP(in) + ATP + H2O = 2',3'-cGAMP(out) + ADP + phosphate + H(+). It carries out the reaction S-[(2E,6E,10E)-geranylgeranyl]-L-glutathione(in) + ATP + H2O = S-[(2E,6E,10E)-geranylgeranyl]-L-glutathione(out) + ADP + phosphate + H(+). The catalysed reaction is prostaglandin A2-S-(R)-glutathione(in) + ATP + H2O = prostaglandin A2-S-(R)-glutathione(out) + ADP + phosphate + H(+). The enzyme catalyses prostaglandin A2-S-(S)-glutathione(in) + ATP + H2O = prostaglandin A2-S-(S)-glutathione(out) + ADP + phosphate + H(+). Its activity is regulated as follows. MK 571 inhibits sphingosine 1-phosphate and leukotriene C4 export. Functionally, mediates export of organic anions and drugs from the cytoplasm. Mediates ATP-dependent transport of glutathione and glutathione conjugates, leukotriene C4, estradiol-17-beta-o-glucuronide, methotrexate, antiviral drugs and other xenobiotics. Confers resistance to anticancer drugs by decreasing accumulation of drug in cells, and by mediating ATP- and GSH-dependent drug export. Hydrolyzes ATP with low efficiency. Catalyzes the export of sphingosine 1-phosphate from mast cells independently of their degranulation. Participates in inflammatory response by allowing export of leukotriene C4 from leukotriene C4-synthesizing cells. Mediates ATP-dependent, GSH-independent cyclic GMP-AMP (cGAMP) export. Thus, by limiting intracellular cGAMP concentrations negatively regulates the cGAS-STING pathway. Exports S-geranylgeranyl-glutathione (GGG) in lymphoid cells and stromal compartments of lymphoid organs. ABCC1 (via extracellular transport) with GGT5 (via GGG catabolism) establish GGG gradients within lymphoid tissues to position P2RY8-positive lymphocytes at germinal centers in lymphoid follicles and restrict their chemotactic transmigration from blood vessels to the bone marrow parenchyma. Mediates basolateral export of GSH-conjugated R- and S-prostaglandin A2 diastereomers in polarized epithelial cells. This Homo sapiens (Human) protein is Multidrug resistance-associated protein 1.